A 735-amino-acid chain; its full sequence is Post-transcriptional regulator MKT1 (735 aa).

The interval Gln475–Lys722 is interaction with PBP1.

The protein belongs to the XPG/RAD2 endonuclease family. As to quaternary structure, forms a complex composed of at least MKT1, PBP1, XAC1 and LSM12. Within the complex, interacts (via C-terminus) with PBP1; the interaction is direct. Interacts with RNA-binding protein ZC3H11 (via MKT1-binding motif); the interaction is direct. May interact with RNA-binding proteins CFB1 and CFB2. Interacts with the EIF4E6-EIF4G5 translation initiation complex via EIF4G5; the interaction with EIF4G5 is direct.

The protein localises to the cytoplasm. Its subcellular location is the cytosol. It is found in the stress granule. Its function is as follows. Involved in post-transcriptional regulation of gene expression. Promotes mRNA stabilization by recruiting a complex containing PBP1, LSM12 and XAC1 to mRNAs. Recruited to mRNAs by sequence-specific RNA binding proteins. May regulate translation through interactions with the EIF4E6-EIF4G5 translation initiation complex. This chain is Post-transcriptional regulator MKT1, found in Trypanosoma brucei brucei (strain 927/4 GUTat10.1).